The following is a 386-amino-acid chain: Acetate kinase (386 aa).

Asn9 provides a ligand contact to Mg(2+). ATP is bound at residue Lys16. Arg74 provides a ligand contact to substrate. The Proton donor/acceptor role is filled by Asp131. Residues 191-195 (HLGNG), 265-267 (DFR), and 313-317 (GVGEN) contribute to the ATP site. Residue Glu367 coordinates Mg(2+).

The protein belongs to the acetokinase family. In terms of assembly, homodimer. Mg(2+) is required as a cofactor. It depends on Mn(2+) as a cofactor.

It is found in the cytoplasm. It carries out the reaction acetate + ATP = acetyl phosphate + ADP. It participates in metabolic intermediate biosynthesis; acetyl-CoA biosynthesis; acetyl-CoA from acetate: step 1/2. Catalyzes the formation of acetyl phosphate from acetate and ATP. Can also catalyze the reverse reaction. The polypeptide is Acetate kinase (Mycolicibacterium gilvum (strain PYR-GCK) (Mycobacterium gilvum (strain PYR-GCK))).